The following is a 438-amino-acid chain: Glycerophosphocholine cholinephosphodiesterase ENPP6 (438 aa).

A signal peptide spans 1–22 (MTRTLLKIYTLFILLLCRQRDA). Positions 32, 69, and 90 each coordinate substrate. The Zn(2+) site is built by D32 and S69. The active-site Nucleophile is the S69. The residue at position 69 (S69) is a Phosphoserine. C140 and C152 are disulfide-bonded. A coiled-coil region spans residues 162–226 (KNLTDSMENA…ILNQKIREKN (65 aa)). Residue N163 is glycosylated (N-linked (GlcNAc...) asparagine). D191 is a binding site for substrate. Positions 191, 195, 238, and 239 each coordinate Zn(2+). A substrate-binding site is contributed by H239. N-linked (GlcNAc...) asparagine glycosylation is found at N258, N287, and N339. Residue H352 coordinates substrate. Position 352 (H352) interacts with Zn(2+). N-linked (GlcNAc...) asparagine glycosylation occurs at N402. S415 carries the GPI-anchor amidated serine lipid modification. The propeptide at 416–438 (AATAGASLISCCFLLLLTLTGVC) is removed in mature form.

The protein belongs to the nucleotide pyrophosphatase/phosphodiesterase family. The cofactor is Zn(2+).

Its subcellular location is the cell membrane. The catalysed reaction is sn-glycerol 3-phosphocholine + H2O = phosphocholine + glycerol + H(+). It carries out the reaction a 1-acyl-sn-glycero-3-phosphocholine + H2O = a 1-acyl-sn-glycerol + phosphocholine + H(+). It catalyses the reaction a 1-O-alkyl-sn-glycero-3-phosphocholine + H2O = a 1-O-alkyl-sn-glycerol + phosphocholine + H(+). The enzyme catalyses 1-dodecanoyl-sn-glycero-3-phosphocholine + H2O = 1-dodecanoyl-sn-glycerol + phosphocholine + H(+). The catalysed reaction is 1-hexadecanoyl-sn-glycero-3-phosphocholine + H2O = 1-hexadecanoyl-sn-glycerol + phosphocholine + H(+). It carries out the reaction 1-(5Z,8Z,11Z,14Z-eicosatetraenoyl)-sn-glycero-3-phosphocholine + H2O = 1-(5Z,8Z,11Z,14Z-eicosatetraenoyl)-sn-glycerol + phosphocholine + H(+). It catalyses the reaction 1-tetradecanoyl-sn-glycero-3-phosphocholine + H2O = 1-tetradecanoyl-sn-glycerol + phosphocholine + H(+). The enzyme catalyses sphing-4-enine-phosphocholine + H2O = sphing-4-enine + phosphocholine + H(+). The catalysed reaction is 1-(9Z-octadecenoyl)-sn-glycero-3-phosphocholine + H2O = 1-(9Z-octadecenoyl)-sn-glycerol + phosphocholine + H(+). It carries out the reaction 1-(9Z,12Z)-octadecadienoyl-sn-glycero-3-phosphocholine + H2O = 1-(9Z,12Z-octadecadienoyl)-sn-glycerol + phosphocholine + H(+). It catalyses the reaction glycero-2-phosphocholine + H2O = phosphocholine + glycerol + H(+). Functionally, choline-specific glycerophosphodiesterase that hydrolyzes glycerophosphocholine (GPC) and lysophosphatidylcholine (LPC) and contributes to supplying choline to the cells. Has a preference for LPC with short (12:0 and 14:0) or polyunsaturated (18:2 and 20:4) fatty acids. In vitro, hydrolyzes only choline-containing lysophospholipids, such as sphingosylphosphorylcholine (SPC), platelet-activating factor (PAF) and lysoPAF, but not other lysophospholipids. In Danio rerio (Zebrafish), this protein is Glycerophosphocholine cholinephosphodiesterase ENPP6.